The following is a 289-amino-acid chain: MDDKSMARGRKAFVTGFPIKHSRSPLIHGFWLKELGIDGSYEAVEVKPEDFSSFAASLAANGFAGGNVTIPHKEAAYAAAESLDEAACAIGAVNTLWLENGRLCGGNTDAYGFAANLDASAPGWDKADRALVLGAGGASRAVVHALLSRGVCHVSVVNRTLSRAEELAAHFGARVYAHGWDEAQALVSNAGLIVNTTALGMSGHGEGQDFPIDLTCAPKEAVATDIVYVPLRTAFLNKAEKAGLKTVDGLGMLLHQAVPGFERWFGQRPQVTQALREHILADMAKAGAL.

Shikimate contacts are provided by residues 22-24 and Thr-69; that span reads SRS. Lys-73 (proton acceptor) is an active-site residue. Glu-85 lines the NADP(+) pocket. Positions 94 and 109 each coordinate shikimate. NADP(+)-binding positions include 134–138, 158–163, and Ile-226; these read GAGGA and NRTLSR. Residue Tyr-228 coordinates shikimate. Gly-249 contacts NADP(+).

It belongs to the shikimate dehydrogenase family. In terms of assembly, homodimer.

The catalysed reaction is shikimate + NADP(+) = 3-dehydroshikimate + NADPH + H(+). The protein operates within metabolic intermediate biosynthesis; chorismate biosynthesis; chorismate from D-erythrose 4-phosphate and phosphoenolpyruvate: step 4/7. Its function is as follows. Involved in the biosynthesis of the chorismate, which leads to the biosynthesis of aromatic amino acids. Catalyzes the reversible NADPH linked reduction of 3-dehydroshikimate (DHSA) to yield shikimate (SA). This is Shikimate dehydrogenase (NADP(+)) from Brucella canis (strain ATCC 23365 / NCTC 10854 / RM-666).